Reading from the N-terminus, the 276-residue chain is Reaction center protein L chain (276 aa).

3 helical membrane-spanning segments follow: residues 33-56, 85-113, and 116-141; these read GFFG…GAAL, GLWQ…RKLG, and YHIP…VMMG. The (7R,8Z)-bacteriochlorophyll b site is built by H154 and H174. The helical transmembrane segment at 171-200 threads the bilayer; sequence NPAHMLGITLFFTTCLALALHGSLILSAAN. H191 provides a ligand contact to Fe cation. F217 lines the a ubiquinone pocket. A helical membrane pass occupies residues 226-252; it reads GTLGIHRVGLILALSAVVWSIICMILS. Residue H231 coordinates Fe cation.

This sequence belongs to the reaction center PufL/M/PsbA/D family. Reaction center is composed of four bacteriochlorophylls, two bacteriopheophytins, two ubiquinones, one iron, and three highly hydrophobic polypeptide chains (designated L, M, and H).

Its subcellular location is the cellular chromatophore membrane. The reaction center is a membrane-bound complex that mediates the initial photochemical event in the electron transfer process of photosynthesis. This is Reaction center protein L chain (pufL) from Rhodospirillum rubrum.